The chain runs to 317 residues: Transaldolase (317 aa).

K132 (schiff-base intermediate with substrate) is an active-site residue.

This sequence belongs to the transaldolase family. Type 1 subfamily.

It is found in the cytoplasm. The enzyme catalyses D-sedoheptulose 7-phosphate + D-glyceraldehyde 3-phosphate = D-erythrose 4-phosphate + beta-D-fructose 6-phosphate. It functions in the pathway carbohydrate degradation; pentose phosphate pathway; D-glyceraldehyde 3-phosphate and beta-D-fructose 6-phosphate from D-ribose 5-phosphate and D-xylulose 5-phosphate (non-oxidative stage): step 2/3. Transaldolase is important for the balance of metabolites in the pentose-phosphate pathway. The chain is Transaldolase from Haemophilus influenzae (strain ATCC 51907 / DSM 11121 / KW20 / Rd).